A 620-amino-acid chain; its full sequence is MIYCVLSTTPGTFWFPSGFDPKPYHPSADSKLLPLGLITLSACSTRVSATTRWSSFHATDPSLSWLTGSSPWLVILQGQGGSLFCHDVLQGRLYILSHSVSLFLKTGLRHCEAIYRAPLWRDRPLPSLWTCRDPDKAFLPTLLARSARRGLAAFYALWRLHLGSRSELSHPVLEWESTELVLTDWRRGRNEAQRDAPSVAEHFARCRPLLDELCGEGGWLPFAFLSTSPHVWLILTEGGPVLAVDVNDTSVWRIADDLELLRRLGSLLLLSGLRLPLRPPSGSGEAAGEPGYEEEERRGRASTASATAATSTRGPTRPTRVTRKGRVATGGVHLSARPESEEQTDGHHGRQESSDDHQRGGSGRGHRDDGAHRHANDKTEPQQRGEHEERKQTDSGRHEHAQESQVARRDEEETEQGDSERSCGGATQTYGGRGRHDSCPSIPLSVPGPDPRLWVPPPHLLFPSPLPPMTPVDDEPSVRPRCPPGPAEEPPTCRPRPPRPSSDTPLSAVSRPSAPPVPPPSTARVRFFLSSSSSSPSYSPAPLSPPSPVSPSSPRSPFIPPIRSPGLRAKPRVSSGHPAAFPPAPSSAPARSERVTSVPSSASPSASCVGKSQPPAAHTA.

2 stretches are compositionally biased toward low complexity: residues 278 to 290 (RPPS…AGEP) and 301 to 319 (ASTA…TRPT). The disordered stretch occupies residues 278 to 620 (RPPSGSGEAA…KSQPPAAHTA (343 aa)). A compositionally biased stretch (basic and acidic residues) spans 336–411 (ARPESEEQTD…QESQVARRDE (76 aa)). 2 stretches are compositionally biased toward pro residues: residues 446-470 (VPGP…PPMT) and 481-500 (RCPP…PPRP). 2 stretches are compositionally biased toward low complexity: residues 501–512 (SSDTPLSAVSRP) and 522–541 (TARV…YSPA). Positions 542 to 551 (PLSPPSPVSP) are enriched in pro residues. Over residues 597–607 (SVPSSASPSAS) the composition is skewed to low complexity.

It belongs to the herpesviridae US22 family.

This is an uncharacterized protein from Homo sapiens (Human).